A 487-amino-acid polypeptide reads, in one-letter code: Signal recognition particle subunit SRP54 (487 aa).

A G-domain region spans residues 1–295 (MVLSQLGSSL…DAESFVRKLL (295 aa)). GTP is bound by residues 108–115 (GLQGAGKT), 190–194 (DTSGR), and 248–251 (TKLD). Residues 296-487 (GMGDLKGIAK…LGGTGKKGKK (192 aa)) form an M-domain region.

This sequence belongs to the GTP-binding SRP family. SRP54 subfamily. As to quaternary structure, component of a signal recognition particle (SRP) complex that consists of a 7SL RNA molecule of 300 nucleotides and six protein subunits: SRP72, SRP68, SRP54, SRP19, SRP14 and SRP9.

The protein resides in the cytoplasm. It is found in the endoplasmic reticulum. It carries out the reaction GTP + H2O = GDP + phosphate + H(+). Component of the signal recognition particle (SRP) complex, a ribonucleoprotein complex that mediates the cotranslational targeting of secretory and membrane proteins to the endoplasmic reticulum (ER). As part of the SRP complex, associates with the SRP receptor (SR) component SRPRA to target secretory proteins to the endoplasmic reticulum membrane. Binds to the signal sequence of presecretory proteins when they emerge from the ribosomes. Displays basal GTPase activity, and stimulates reciprocal GTPase activation of the SR subunit SRPRA. Forms a guanosine 5'-triphosphate (GTP)-dependent complex with the SR subunit SRPRA. SR compaction and GTPase mediated rearrangement of SR drive SRP-mediated cotranslational protein translocation into the ER. Requires the presence of SRP9/SRP14 and/or SRP19 to stably interact with RNA. This is Signal recognition particle subunit SRP54 from Entamoeba histolytica (strain ATCC 30459 / HM-1:IMSS / ABRM).